The chain runs to 367 residues: CCN family member 4 (367 aa).

Positions 1–22 (MRWLLPWTLAAVAVLRVGNILA) are cleaved as a signal peptide. Residues 45 to 118 (RPEFCKWPCE…RYAIGVCAQV (74 aa)) form the IGFBP N-terminal domain. Disulfide bonds link Cys49–Cys73, Cys53–Cys75, Cys55–Cys76, and Cys62–Cys79. A glycan (N-linked (GlcNAc...) asparagine) is linked at Asn86. Cystine bridges form between Cys87–Cys101 and Cys93–Cys115. Positions 121–186 (VGCVLDGVRY…GQCCEQWVCD (66 aa)) constitute a VWFC domain. An N-linked (GlcNAc...) asparagine glycan is attached at Asn143. The TSP type-1 domain occupies 215–260 (NCIAYTSPWSPCSTTCGLGISTRISNVNARCWPEQESRLCNLRPCD). Intrachain disulfides connect Cys273/Cys310, Cys290/Cys324, Cys301/Cys340, Cys304/Cys342, and Cys309/Cys346. The 75-residue stretch at 273-347 (CLAVYQPEEA…NACFCNLSCR (75 aa)) folds into the CTCK domain. A glycan (N-linked (GlcNAc...) asparagine) is linked at Asn284. Asn343 carries an N-linked (GlcNAc...) asparagine glycan.

It belongs to the CCN family. In terms of tissue distribution, highly expressed in kidney and lung. Lower levels in heart, brain, spleen, liver, skeletal muscle and testis. Expressed in low metastatic melanoma cells.

Its subcellular location is the secreted. Its function is as follows. Downstream regulator in the Wnt/Frizzled-signaling pathway. Associated with cell survival. Adheres to skin and melanoma fibroblasts. In vitro binding to skin fibroblasts occurs through the proteoglycans, decorin and biglycan. Suppresses tumor growth in vivo. This chain is CCN family member 4 (Ccn4), found in Mus musculus (Mouse).